Reading from the N-terminus, the 238-residue chain is Uridylate kinase (238 aa).

10–13 (KFSG) contributes to the ATP binding site. Residues 18–23 (GENGFG) are involved in allosteric activation by GTP. Gly-52 contributes to the UMP binding site. ATP contacts are provided by Gly-53 and Arg-57. UMP-binding positions include Asp-73 and 134–141 (TGNPFFTT). Thr-161, Tyr-167, and Asp-170 together coordinate ATP.

This sequence belongs to the UMP kinase family. As to quaternary structure, homohexamer.

The protein localises to the cytoplasm. The enzyme catalyses UMP + ATP = UDP + ADP. Its pathway is pyrimidine metabolism; CTP biosynthesis via de novo pathway; UDP from UMP (UMPK route): step 1/1. With respect to regulation, allosterically activated by GTP. Inhibited by UTP. In terms of biological role, catalyzes the reversible phosphorylation of UMP to UDP. The protein is Uridylate kinase of Campylobacter concisus (strain 13826).